Reading from the N-terminus, the 341-residue chain is Methionine import ATP-binding protein MetN (341 aa).

Residues 9–247 form the ABC transporter domain; it reads ISVQDVSKKL…SENSITNELF (239 aa). Position 41–48 (41–48) interacts with ATP; that stretch reads GHSGSGKT.

The protein belongs to the ABC transporter superfamily. Methionine importer (TC 3.A.1.24) family. As to quaternary structure, the complex is composed of two ATP-binding proteins (MetN), two transmembrane proteins (MetI) and a solute-binding protein (MetQ).

The protein resides in the cell inner membrane. The catalysed reaction is L-methionine(out) + ATP + H2O = L-methionine(in) + ADP + phosphate + H(+). It carries out the reaction D-methionine(out) + ATP + H2O = D-methionine(in) + ADP + phosphate + H(+). In terms of biological role, part of the ABC transporter complex MetNIQ involved in methionine import. Responsible for energy coupling to the transport system. This Chlamydia pneumoniae (Chlamydophila pneumoniae) protein is Methionine import ATP-binding protein MetN.